Reading from the N-terminus, the 421-residue chain is Bone morphogenetic protein 10 (421 aa).

An N-terminal signal peptide occupies residues methionine 1–glycine 21. Positions serine 22–arginine 313 are excised as a propeptide. N-linked (GlcNAc...) asparagine glycans are attached at residues asparagine 67 and asparagine 131. 3 cysteine pairs are disulfide-bonded: cysteine 320-cysteine 386, cysteine 349-cysteine 418, and cysteine 353-cysteine 420.

It belongs to the TGF-beta family. As to quaternary structure, homodimer; disulfide-linked. Interacts with FBN1 (via N-terminal domain) and FBN2. Interacts with ENG. As to expression, in the embryo, expressed exclusively in the ventricular trabecular myocardium of the developing heart from 9.0 dpc-13.5 dpc. By 16.5 dpc-18.5 dpc, only detectable in atria. Highly expressed in the adult heart where it is found in the right atrium but not in the left atrium. Lower levels in adult liver and lung.

It localises to the secreted. Functionally, required for maintaining the proliferative activity of embryonic cardiomyocytes by preventing premature activation of the negative cell cycle regulator CDKN1C/p57KIP and maintaining the required expression levels of cardiogenic factors such as MEF2C and NKX2-5. Acts as a ligand for ACVRL1/ALK1, BMPR1A/ALK3 and BMPR1B/ALK6, leading to activation of SMAD1, SMAD5 and SMAD8 transcription factors. Inhibits endothelial cell migration and growth. May reduce cell migration and cell matrix adhesion in breast cancer cell lines. This is Bone morphogenetic protein 10 (Bmp10) from Mus musculus (Mouse).